The following is an 80-amino-acid chain: RNA-binding protein Hfq (80 aa).

The Sm domain occupies 10 to 69; the sequence is DPFLNTLRREHVPVSIYLVNGIKLQGQIESFDQYVVLLKNTVTQMVYKHAISTVVPARPV.

Belongs to the Hfq family. Homohexamer.

Functionally, RNA chaperone that binds small regulatory RNA (sRNAs) and mRNAs to facilitate mRNA translational regulation in response to envelope stress, environmental stress and changes in metabolite concentrations. Also binds with high specificity to tRNAs. In Azoarcus sp. (strain BH72), this protein is RNA-binding protein Hfq.